The chain runs to 140 residues: GSDLVSGFWGKVDAHKIGGEALARLLVVYPWTQRYFTTFGNLGSADAICHNAKVLAHGEKVLAAIGEGLKHPENLKAHYAKLSEYHSNKLHVDPANFRLLGNVFITVLARHFQHEFTPELQHALEAHFCAVGDALAKAYH.

The Globin domain occupies 1 to 140 (GSDLVSGFWG…VGDALAKAYH (140 aa)). H57 and H86 together coordinate heme b.

It belongs to the globin family. As to quaternary structure, heterotetramer of two alpha chains and two beta chains. Red blood cells.

Its function is as follows. Involved in oxygen transport from the lung to the various peripheral tissues. The chain is Hemoglobin subunit beta (HBB) from Pelophylax lessonae (Pool frog).